The sequence spans 471 residues: Amidophosphoribosyltransferase (471 aa).

The active-site Nucleophile is Cys-2. The Glutamine amidotransferase type-2 domain maps to 2–224; sequence CGIFGIYSYE…PGEIIEIKDG (223 aa). Residue Cys-255 participates in [4Fe-4S] cluster binding. Mg(2+)-binding residues include Ser-302, Asp-364, and Asp-365. [4Fe-4S] cluster contacts are provided by Cys-401, Cys-450, and Cys-453.

In the C-terminal section; belongs to the purine/pyrimidine phosphoribosyltransferase family. The cofactor is Mg(2+). [4Fe-4S] cluster serves as cofactor.

The catalysed reaction is 5-phospho-beta-D-ribosylamine + L-glutamate + diphosphate = 5-phospho-alpha-D-ribose 1-diphosphate + L-glutamine + H2O. It functions in the pathway purine metabolism; IMP biosynthesis via de novo pathway; N(1)-(5-phospho-D-ribosyl)glycinamide from 5-phospho-alpha-D-ribose 1-diphosphate: step 1/2. Catalyzes the formation of phosphoribosylamine from phosphoribosylpyrophosphate (PRPP) and glutamine. In Methanocaldococcus jannaschii (strain ATCC 43067 / DSM 2661 / JAL-1 / JCM 10045 / NBRC 100440) (Methanococcus jannaschii), this protein is Amidophosphoribosyltransferase.